Consider the following 150-residue polypeptide: Globin (150 aa).

A Globin domain is found at 11–150; that stretch reads PLSAAEKTKI…MICILLRSAY (140 aa). Heme b is bound by residues His-74 and His-106.

This sequence belongs to the globin family. In terms of assembly, monomer.

This is Globin from Lampetra fluviatilis (European river lamprey).